The chain runs to 379 residues: Acyl-CoA dehydrogenase (379 aa).

Belongs to the acyl-CoA dehydrogenase family. The cofactor is FAD.

It catalyses the reaction a 2,3-saturated acyl-CoA + A = a 2,3-dehydroacyl-CoA + AH2. This Bacillus subtilis (strain 168) protein is Acyl-CoA dehydrogenase (mmgC).